Here is a 357-residue protein sequence, read N- to C-terminus: Phenylalanine--tRNA ligase alpha subunit (357 aa).

Glu257 contributes to the Mg(2+) binding site.

Belongs to the class-II aminoacyl-tRNA synthetase family. Phe-tRNA synthetase alpha subunit type 1 subfamily. As to quaternary structure, tetramer of two alpha and two beta subunits. Mg(2+) serves as cofactor.

It is found in the cytoplasm. The catalysed reaction is tRNA(Phe) + L-phenylalanine + ATP = L-phenylalanyl-tRNA(Phe) + AMP + diphosphate + H(+). This chain is Phenylalanine--tRNA ligase alpha subunit, found in Ruegeria sp. (strain TM1040) (Silicibacter sp.).